The sequence spans 252 residues: Flagellar brake protein YcgR (252 aa).

The 116-residue stretch at Q123–T238 folds into the PilZ domain.

The protein belongs to the YcgR family. Monomer. Interacts with the flagellar basal bodies.

The protein resides in the bacterial flagellum basal body. Acts as a flagellar brake, regulating swimming and swarming in a bis-(3'-5') cyclic diguanylic acid (c-di-GMP)-dependent manner. Binds 1 c-di-GMP dimer per subunit. Increasing levels of c-di-GMP lead to decreased motility. This Janthinobacterium sp. (strain Marseille) (Minibacterium massiliensis) protein is Flagellar brake protein YcgR.